The sequence spans 108 residues: MIQPSKFENLIAIYDIIFCCLQVYLLCKYKDANKSVFLVPVTWPWALRCSWTTRLLCHDNLVNGKHSSCSFCSDVNSKLFRCKHVINIFLSDVLYTFIRFAINIHTFI.

An N-linked (GlcNAc...) asparagine glycan is attached at Asn-33.

Post-translationally, N-glycosylated.

This is an uncharacterized protein from Saccharomyces cerevisiae (strain ATCC 204508 / S288c) (Baker's yeast).